Consider the following 84-residue polypeptide: Cell division topological specificity factor (84 aa).

This sequence belongs to the MinE family.

In terms of biological role, prevents the cell division inhibition by proteins MinC and MinD at internal division sites while permitting inhibition at polar sites. This ensures cell division at the proper site by restricting the formation of a division septum at the midpoint of the long axis of the cell. This chain is Cell division topological specificity factor, found in Paraburkholderia phymatum (strain DSM 17167 / CIP 108236 / LMG 21445 / STM815) (Burkholderia phymatum).